Reading from the N-terminus, the 195-residue chain is Small ribosomal subunit protein uS7 (195 aa).

The protein belongs to the universal ribosomal protein uS7 family. Part of the 30S ribosomal subunit.

One of the primary rRNA binding proteins, it binds directly to 16S rRNA where it nucleates assembly of the head domain of the 30S subunit. Is located at the subunit interface close to the decoding center. The polypeptide is Small ribosomal subunit protein uS7 (Sulfolobus acidocaldarius (strain ATCC 33909 / DSM 639 / JCM 8929 / NBRC 15157 / NCIMB 11770)).